Reading from the N-terminus, the 380-residue chain is Queuine tRNA-ribosyltransferase (380 aa).

The active-site Proton acceptor is D96. Substrate contacts are provided by residues 96–100 (DSGGF), D150, Q193, and G220. The interval 251–257 (GVGAPDS) is RNA binding. The active-site Nucleophile is D270. The segment at 275-279 (TRIAR) is RNA binding; important for wobble base 34 recognition. Residues C308, C310, C313, and H339 each coordinate Zn(2+).

The protein belongs to the queuine tRNA-ribosyltransferase family. As to quaternary structure, homodimer. Within each dimer, one monomer is responsible for RNA recognition and catalysis, while the other monomer binds to the replacement base PreQ1. It depends on Zn(2+) as a cofactor.

The catalysed reaction is 7-aminomethyl-7-carbaguanine + guanosine(34) in tRNA = 7-aminomethyl-7-carbaguanosine(34) in tRNA + guanine. Its pathway is tRNA modification; tRNA-queuosine biosynthesis. In terms of biological role, catalyzes the base-exchange of a guanine (G) residue with the queuine precursor 7-aminomethyl-7-deazaguanine (PreQ1) at position 34 (anticodon wobble position) in tRNAs with GU(N) anticodons (tRNA-Asp, -Asn, -His and -Tyr). Catalysis occurs through a double-displacement mechanism. The nucleophile active site attacks the C1' of nucleotide 34 to detach the guanine base from the RNA, forming a covalent enzyme-RNA intermediate. The proton acceptor active site deprotonates the incoming PreQ1, allowing a nucleophilic attack on the C1' of the ribose to form the product. After dissociation, two additional enzymatic reactions on the tRNA convert PreQ1 to queuine (Q), resulting in the hypermodified nucleoside queuosine (7-(((4,5-cis-dihydroxy-2-cyclopenten-1-yl)amino)methyl)-7-deazaguanosine). The chain is Queuine tRNA-ribosyltransferase from Streptococcus suis (strain 98HAH33).